A 316-amino-acid polypeptide reads, in one-letter code: Pantothenate kinase (316 aa).

95-102 (GSVAVGKS) provides a ligand contact to ATP.

It belongs to the prokaryotic pantothenate kinase family.

Its subcellular location is the cytoplasm. The enzyme catalyses (R)-pantothenate + ATP = (R)-4'-phosphopantothenate + ADP + H(+). It functions in the pathway cofactor biosynthesis; coenzyme A biosynthesis; CoA from (R)-pantothenate: step 1/5. This is Pantothenate kinase from Cronobacter sakazakii (strain ATCC BAA-894) (Enterobacter sakazakii).